A 494-amino-acid polypeptide reads, in one-letter code: DnaJ homolog subfamily C member 7 (494 aa).

Alanine 2 bears the N-acetylalanine mark. 9 TPR repeats span residues alanine 28–asparagine 61, alanine 62–phenylalanine 95, valine 96–asparagine 129, valine 142–cysteine 175, arginine 177–asparagine 209, alanine 210–histidine 243, leucine 256–asparagine 289, alanine 294–tyrosine 327, and isoleucine 328–lysine 361. Positions aspartate 381–glutamine 451 constitute a J domain. The residue at position 393 (serine 393) is a Phosphoserine.

As to quaternary structure, associates with complexes containing chaperones HSP70 and HSP90. Interacts with the GAP domain of NF1. Interacts with HSP90AA1. Interacts with HSPA1A/B; the interaction is enhanced by ATP. Interacts with HSP90AB1. Interacts with PGR. Interacts with RAD9A; the interaction is interrupted by UV and heat shock treatments. Interacts with HUS1 and RAD1. Interacts with NR1I3. The DNAJC7-NR1I3 complex may also include HSP90. Interacts with HSPA8.

It localises to the cytoplasm. The protein resides in the nucleus. It is found in the cytoskeleton. Its function is as follows. Acts as a co-chaperone regulating the molecular chaperones HSP70 and HSP90 in folding of steroid receptors, such as the glucocorticoid receptor and the progesterone receptor. Proposed to act as a recycling chaperone by facilitating the return of chaperone substrates to early stages of chaperoning if further folding is required. In vitro, induces ATP-independent dissociation of HSP90 but not of HSP70 from the chaperone-substrate complexes. Recruits NR1I3 to the cytoplasm. This chain is DnaJ homolog subfamily C member 7 (DNAJC7), found in Homo sapiens (Human).